The following is a 184-amino-acid chain: Cytidylate kinase (184 aa).

ATP is bound at residue 8–16 (GQPGSGKTT).

Belongs to the cytidylate kinase family. Type 2 subfamily.

The protein resides in the cytoplasm. The catalysed reaction is CMP + ATP = CDP + ADP. It carries out the reaction dCMP + ATP = dCDP + ADP. This is Cytidylate kinase from Pyrobaculum islandicum (strain DSM 4184 / JCM 9189 / GEO3).